We begin with the raw amino-acid sequence, 277 residues long: Phosphonates import ATP-binding protein PhnC 2 (277 aa).

The region spanning 3–251 (ISLNGISVQH…LLQALYAQHL (249 aa)) is the ABC transporter domain. 40-47 (GPSGAGKT) is a binding site for ATP.

The protein belongs to the ABC transporter superfamily. Phosphonates importer (TC 3.A.1.9.1) family. The complex is composed of two ATP-binding proteins (PhnC), two transmembrane proteins (PhnE) and a solute-binding protein (PhnD).

It localises to the cell inner membrane. It catalyses the reaction phosphonate(out) + ATP + H2O = phosphonate(in) + ADP + phosphate + H(+). Part of the ABC transporter complex PhnCDE involved in phosphonates import. Responsible for energy coupling to the transport system. The protein is Phosphonates import ATP-binding protein PhnC 2 of Albidiferax ferrireducens (strain ATCC BAA-621 / DSM 15236 / T118) (Rhodoferax ferrireducens).